We begin with the raw amino-acid sequence, 475 residues long: Exodeoxyribonuclease 7 large subunit (475 aa).

This sequence belongs to the XseA family. Heterooligomer composed of large and small subunits.

The protein localises to the cytoplasm. The catalysed reaction is Exonucleolytic cleavage in either 5'- to 3'- or 3'- to 5'-direction to yield nucleoside 5'-phosphates.. In terms of biological role, bidirectionally degrades single-stranded DNA into large acid-insoluble oligonucleotides, which are then degraded further into small acid-soluble oligonucleotides. In Bartonella henselae (strain ATCC 49882 / DSM 28221 / CCUG 30454 / Houston 1) (Rochalimaea henselae), this protein is Exodeoxyribonuclease 7 large subunit.